Reading from the N-terminus, the 370-residue chain is uncharacterized protein (370 aa).

This is an uncharacterized protein from Caenorhabditis elegans.